A 149-amino-acid chain; its full sequence is MPRSPAKTSPRKGSPRKGSPRKGSPSRKASPKRGGKGAKRAGKGGRRRRVVKRRRRRRESYGIYIYKVLKQVHPDTGISSRAMSVMNSFVNDVFERIASEASRLTSANRRSTVSSREIQTAVRLLLPGELAKHAVSEGTKAVTKYTTSR.

Residues 1–57 (MPRSPAKTSPRKGSPRKGSPRKGSPSRKASPKRGGKGAKRAGKGGRRRRVVKRRRRR) are disordered. Short sequence motifs (SPKK motif) lie at residues 4-7 (SPAK), 9-12 (SPRK), 14-17 (SPRK), 19-22 (SPRK), 24-27 (SPSR), and 30-33 (SPKR). Positions 9–20 (SPRKGSPRKGSP) are enriched in basic residues. A phosphoserine mark is found at serine 19, serine 24, and serine 30. Basic residues predominate over residues 29-57 (ASPKRGGKGAKRAGKGGRRRRVVKRRRRR). Serine 136 carries O-linked (GlcNAc) serine glycosylation. Lysine 144 is covalently cross-linked (Glycyl lysine isopeptide (Lys-Gly) (interchain with G-Cter in ubiquitin)).

This sequence belongs to the histone H2B family. As to quaternary structure, the nucleosome is a histone octamer containing two molecules each of H2A, H2B, H3 and H4 assembled in one H3-H4 heterotetramer and two H2A-H2B heterodimers. The octamer wraps approximately 147 bp of DNA. In terms of processing, monoubiquitination of Lys-144 gives a specific tag for epigenetic transcriptional activation and is also prerequisite for histone H3 'Lys-4' and 'Lys-79' methylation. Post-translationally, phosphorylated on SPKK motifs 4, 5 and 6; which may regulate DNA binding. Dephosphorylated during maturation of spermatids to mature sperm and rephosphorylated at fertilization. GlcNAcylation at Ser-136 promotes monoubiquitination of Lys-144. It fluctuates in response to extracellular glucose, and associates with transcribed genes.

The protein localises to the nucleus. The protein resides in the chromosome. Functionally, core component of nucleosome. Nucleosomes wrap and compact DNA into chromatin, limiting DNA accessibility to the cellular machineries which require DNA as a template. Histones thereby play a central role in transcription regulation, DNA repair, DNA replication and chromosomal stability. DNA accessibility is regulated via a complex set of post-translational modifications of histones, also called histone code, and nucleosome remodeling. This chain is Histone H2B.3, sperm, found in Parechinus angulosus (Angulate sea urchin).